The following is a 1222-amino-acid chain: Deubiquitinating protein VCPIP1 (1222 aa).

Over residues 1-21 the composition is skewed to pro residues; that stretch reads MSQPPPPPPPLPPPPPPPEAP. Positions 1–36 are disordered; the sequence is MSQPPPPPPPLPPPPPPPEAPQTPSSLASAAASGGL. Low complexity predominate over residues 25-36; sequence SSLASAAASGGL. An OTU domain is found at 208–361; the sequence is LIPVHVDGDG…RNHYIPLVGI (154 aa). The active site involves Asp216. Cys219 functions as the Nucleophile in the catalytic mechanism. Residue His354 is part of the active site. An N6-acetyllysine modification is found at Lys408. Disordered stretches follow at residues 725 to 776, 989 to 1009, and 1024 to 1074; these read SVMQ…KEKK, EATT…LGSG, and AFQG…VFTA. Phosphoserine occurs at positions 747 and 757. Positions 755–771 are enriched in low complexity; it reads PSSAPATPTKAPYSPTT. Thr763 bears the Phosphothreonine mark. Phosphoserine is present on residues Ser768, Ser994, and Ser998. Residues 1041 to 1050 show a composition bias toward basic and acidic residues; the sequence is LDPRARETSV. The span at 1057–1074 shows a compositional bias: polar residues; that stretch reads GTDFSNSSTKTEPSVFTA. Ser1077 carries the phosphoserine modification. Disordered regions lie at residues 1113–1175 and 1188–1222; these read VSSI…TETT and ATRS…MDHS. Over residues 1143–1157 the composition is skewed to polar residues; it reads VVSSSAKSGSLQTGL. The span at 1163-1175 shows a compositional bias: low complexity; that stretch reads LTGGTENLNTETT. Position 1198 is a phosphoserine (Ser1198). Residues 1200-1209 are compositionally biased toward acidic residues; sequence EELEEMDSQD. Ser1207 carries the phosphoserine; by ATM modification. Over residues 1210–1222 the composition is skewed to polar residues; sequence AEMTNTTEPMDHS.

In terms of assembly, binds VCP and the ternary complex containing STX5A, NSFL1C and VCP. In terms of processing, phosphorylated at Ser-1207 by ATM or ATR following induction of covalent DNA-protein cross-links (DPCs).

It localises to the nucleus. The protein localises to the cytoplasm. Its subcellular location is the endoplasmic reticulum. It is found in the golgi apparatus. The protein resides in the golgi stack. The catalysed reaction is Thiol-dependent hydrolysis of ester, thioester, amide, peptide and isopeptide bonds formed by the C-terminal Gly of ubiquitin (a 76-residue protein attached to proteins as an intracellular targeting signal).. Deubiquitinating enzyme involved in DNA repair and reassembly of the Golgi apparatus and the endoplasmic reticulum following mitosis. Necessary for VCP-mediated reassembly of Golgi stacks after mitosis. Plays a role in VCP-mediated formation of transitional endoplasmic reticulum (tER). Mediates dissociation of the ternary complex containing STX5A, NSFL1C and VCP. Also involved in DNA repair following phosphorylation by ATM or ATR: acts by catalyzing deubiquitination of SPRTN, thereby promoting SPRTN recruitment to chromatin and subsequent proteolytic cleavage of covalent DNA-protein cross-links (DPCs). Hydrolyzes 'Lys-11'- and 'Lys-48'-linked polyubiquitin chains. Functionally, (Microbial infection) Regulates the duration of C.botulinum neurotoxin type A (BoNT/A) intoxication by catalyzing deubiquitination of Botulinum neurotoxin A light chain (LC), thereby preventing LC degradation by the proteasome, and accelerating botulinum neurotoxin intoxication in patients. The sequence is that of Deubiquitinating protein VCPIP1 from Homo sapiens (Human).